The following is a 110-amino-acid chain: Bowman-Birk type proteinase inhibitor (110 aa).

A signal peptide spans 1–28; the sequence is MVLMNKKAIMKLALMLFLLGFTANVVDA. The propeptide occupies 29 to 42; that stretch reads RFDSTSFITQVLSN. 7 cysteine pairs are disulfide-bonded: Cys-50-Cys-103, Cys-51-Cys-66, Cys-54-Cys-99, Cys-56-Cys-64, Cys-73-Cys-80, Cys-77-Cys-92, and Cys-82-Cys-90.

In terms of assembly, monomer.

Functionally, inhibitor of trypsin and of chymotrypsin. The sequence is that of Bowman-Birk type proteinase inhibitor from Lens culinaris (Lentil).